Consider the following 476-residue polypeptide: MTADLALIWPELILTIGGLITLMLGTFMGDRQVGTYQLSALLTLAAAAAAAIALFGVETTVFSGTLSVDAFGGFAKLLIYAASFICILVAPRFFTGGMRAEYPTLILFAALGMGIMASSRDLMTLYVGLELNSLAAYVLASFMRSDERSSEAGLKYFVLGALASGMLLYGISLLYGFTGTTDFAGIAAAMGGEPGIGLIFGIVFVLSGLGFKISAVPFHMWTPDVYEGAPTPVTTFFASAPKVAAMALMARIVIDAMGPAVGAWQQIVIFLALASIILGAVGAIGQKNIKRLLAYSSINNVGFMLIGLAAGTQQGVEGVLTYLLVYLVTTLGAFLVVLQLRDEGGNQVESIPALAGLSQRRPGLAAAMSVFLFSLAGIPPLFGFWPKYLVFEAAVNANLVPLAVAGIVASVIGAFYYIAIIKTMYFDDKSDVEVTGGGNAVEGTIVAASALWLLAVGYLFIPALAVASAHAASVLF.

Transmembrane regions (helical) follow at residues 5 to 25 (LALI…LMLG), 38 to 58 (LSAL…FGVE), 70 to 90 (AFGG…ILVA), 97 to 117 (GMRA…GIMA), 122 to 142 (LMTL…LASF), 157 to 177 (FVLG…LYGF), 196 to 218 (IGLI…AVPF), 231 to 253 (TPVT…ARIV), 264 to 284 (WQQI…VGAI), 292 to 312 (LLAY…AAGT), 318 to 338 (GVLT…LVVL), 364 to 384 (LAAA…LFGF), 401 to 421 (PLAV…IAII), and 445 to 465 (IVAA…PALA).

It belongs to the complex I subunit 2 family. In terms of assembly, NDH-1 is composed of 14 different subunits. Subunits NuoA, H, J, K, L, M, N constitute the membrane sector of the complex.

It localises to the cell inner membrane. The catalysed reaction is a quinone + NADH + 5 H(+)(in) = a quinol + NAD(+) + 4 H(+)(out). NDH-1 shuttles electrons from NADH, via FMN and iron-sulfur (Fe-S) centers, to quinones in the respiratory chain. The immediate electron acceptor for the enzyme in this species is believed to be ubiquinone. Couples the redox reaction to proton translocation (for every two electrons transferred, four hydrogen ions are translocated across the cytoplasmic membrane), and thus conserves the redox energy in a proton gradient. The sequence is that of NADH-quinone oxidoreductase subunit N from Sphingopyxis alaskensis (strain DSM 13593 / LMG 18877 / RB2256) (Sphingomonas alaskensis).